The primary structure comprises 423 residues: Glucose-1-phosphate adenylyltransferase (423 aa).

Residues tyrosine 108, glycine 173, 188–189, and serine 207 each bind alpha-D-glucose 1-phosphate; that span reads EK.

Belongs to the bacterial/plant glucose-1-phosphate adenylyltransferase family. As to quaternary structure, homotetramer.

The catalysed reaction is alpha-D-glucose 1-phosphate + ATP + H(+) = ADP-alpha-D-glucose + diphosphate. It participates in glycan biosynthesis; glycogen biosynthesis. Functionally, involved in the biosynthesis of ADP-glucose, a building block required for the elongation reactions to produce glycogen. Catalyzes the reaction between ATP and alpha-D-glucose 1-phosphate (G1P) to produce pyrophosphate and ADP-Glc. This Francisella tularensis subsp. mediasiatica (strain FSC147) protein is Glucose-1-phosphate adenylyltransferase.